A 906-amino-acid chain; its full sequence is Transmembrane channel-like protein 2 (906 aa).

The tract at residues 1 to 150 (MSHQVKGLKE…SASGGESLSE (150 aa)) is disordered. Over 1–263 (MSHQVKGLKE…IFLRWMYGVN (263 aa)) the chain is Cytoplasmic. Over residues 69–79 (PRRKQTGRRRH) the composition is skewed to basic residues. The span at 80–127 (REELGEQERGEAERTCEGRRKRDERASFQERTAAPKREKEIPRREEKS) shows a compositional bias: basic and acidic residues. The segment covering 135 to 147 (SSSLASSASGGES) has biased composition (low complexity). The helical transmembrane segment at 264 to 284 (LVLFGLIFGLVIIPEVLMGMP) threads the bilayer. The Extracellular portion of the chain corresponds to 285–336 (YGSIPRKTVPRAEEEKAMDFSVLWDFEGYIKYSALFYGYYNNQRTIGWLRYR). The chain crosses the membrane as a helical span at residues 337 to 357 (LPMAYFMVGVSVFGYSLIIVI). The Cytoplasmic portion of the chain corresponds to 358 to 431 (RSMASNTQGS…NIHLTRFLRV (74 aa)). A helical membrane pass occupies residues 432–452 (LANFLIICCLCGSGYLIYFVV). The Extracellular portion of the chain corresponds to 453–508 (KRSQQFSKMQNVSWYERNEVEIVMSLLGMFCPPLFETIAALENYHPRTGLKWQLGR). A helical membrane pass occupies residues 509 to 529 (IFALFLGNLYTFLLALMDDVH). The Cytoplasmic portion of the chain corresponds to 530-693 (LKLANEETIK…RVFKASRSNN (164 aa)). The chain crosses the membrane as a helical span at residues 694-714 (FYMGLLLLVLFLSLLPVAYTI). The Extracellular portion of the chain corresponds to 715–750 (MSLPPSFDCGPFSGKNRMYDVLQETIENDFPTFLGK). A helical membrane pass occupies residues 751-771 (IFAFLANPGLIIPAILLMFLA). The Cytoplasmic portion of the chain corresponds to 772–906 (IYYLNSVSKS…SGKSAQRPPH (135 aa)). Residues 800 to 906 (EKSHKSVKGK…SGKSAQRPPH (107 aa)) form a disordered region. Polar residues-rich tracts occupy residues 820-846 (KSSSKNATQLQLTKEETTPPSASQSQA), 854-866 (PGTSNSASRTTLP), and 886-900 (APSQTHPWRSASGKS).

This sequence belongs to the TMC family. Forms the MET channel composed of TMC dimer (TMC1 or TMC2), TMIE, TOMT, CIB (CIB2 or CIB3), LHFPL5 and PDH15. The interaction of TMC1 and TMC2 with TOMT is required for the transportation of TMC1/2 into the stereocilia of hair cells. Interacts (via N-terminus) with both isoforms CD1 and CD3 of PCDH15. Can form a heterodimer with TMC1, TMC5 or TMC7. Detected in fetal cochlea.

It is found in the cell membrane. It carries out the reaction Ca(2+)(in) = Ca(2+)(out). In terms of biological role, pore-forming subunit of the mechanotransducer (MET) non-selective cation channel complex located at the tips of stereocilia of cochlear hair cells and that mediates sensory transduction in the auditory system. The MET complex is composed of two dimeric pore-forming ion-conducting transmembrane TMC (TMC1 or TMC2) subunits, and aided by several auxiliary proteins including LHFPL5, TMIE, CIB2/3 and TOMT, and the tip-link PCDH15. MET channel is activated by tension in the tip-link extending from the side wall of one stereocilium to the tip of the adjacent shorter stereocilium, where the channel is located. TMC2 MET channel is highly permeable to calcium and likely transports monovalent cations. Also involved in vestibular hair cell transduction current of the mammalian inner ear. The polypeptide is Transmembrane channel-like protein 2 (Homo sapiens (Human)).